An 814-amino-acid polypeptide reads, in one-letter code: Cellulase/esterase CelE (814 aa).

Positions 1 to 34 (MKKIVSLVCVLVMLVSILGSFSVVAASPVKGFQV) are cleaved as a signal peptide. The cellulase stretch occupies residues 35–354 (SGTKLLDASG…AVFWWDNGYY (320 aa)). The active-site Proton donor; for cellulase activity is Glu-193. Glu-316 functions as the Nucleophile; for cellulase activity in the catalytic mechanism. The Dockerin domain maps to 409 to 479 (ANILYGDVNG…LLRSIDKFPA (71 aa)). Ca(2+) contacts are provided by Asp-415, Asn-417, Asp-419, Gly-420, Lys-421, Asp-426, Asp-451, Val-452, Asn-453, Asp-455, Lys-457, and Asp-462. An esterase region spans residues 490 to 814 (PGILYNGRFD…TAEIKNKLGW (325 aa)). The active-site Nucleophile; for esterase activity is Ser-612.

It in the N-terminal section; belongs to the glycosyl hydrolase 5 (cellulase A) family. In the C-terminal section; belongs to the carbohydrate esterase 2 (CE2) family.

The protein localises to the secreted. The enzyme catalyses Endohydrolysis of (1-&gt;4)-beta-D-glucosidic linkages in cellulose, lichenin and cereal beta-D-glucans.. It catalyses the reaction Deacetylation of xylans and xylo-oligosaccharides.. It functions in the pathway glycan metabolism; cellulose degradation. The protein operates within glycan degradation; xylan degradation. Its activity is regulated as follows. Esterase activity of the CE2 module is inhibited when this domain binds to cellohexaose or beta-glucan. Its function is as follows. Multifunctional enzyme involved in the degradation of plant cell wall polysaccharides. Displays endoglucanase activity against carboxymethyl cellulose (CMC) and barley beta-glucan. Also catalyzes the deacetylation of acetylated birchwood xylan and glucomannan, with a preference for the latter, and of the synthetic substrate 4-nitrophenyl acetate (4-NPAc). This chain is Cellulase/esterase CelE, found in Acetivibrio thermocellus (strain ATCC 27405 / DSM 1237 / JCM 9322 / NBRC 103400 / NCIMB 10682 / NRRL B-4536 / VPI 7372) (Clostridium thermocellum).